Consider the following 289-residue polypeptide: Probable protein phosphatase 2C 39 (289 aa).

One can recognise a PPM-type phosphatase domain in the interval 41–288 (THGFHLVKGK…DDISVVVVKF (248 aa)). Residues aspartate 78, glycine 79, aspartate 240, and aspartate 279 each contribute to the Mn(2+) site.

This sequence belongs to the PP2C family. The cofactor is Mg(2+). It depends on Mn(2+) as a cofactor.

The catalysed reaction is O-phospho-L-seryl-[protein] + H2O = L-seryl-[protein] + phosphate. It carries out the reaction O-phospho-L-threonyl-[protein] + H2O = L-threonyl-[protein] + phosphate. The polypeptide is Probable protein phosphatase 2C 39 (Arabidopsis thaliana (Mouse-ear cress)).